The chain runs to 247 residues: E3 ubiquitin-protein ligase RNF182 (247 aa).

The segment at C20–R68 adopts an RING-type zinc-finger fold. 2 helical membrane passes run V184–L204 and L211–F231.

Interacts with ATP6V0C.

It is found in the membrane. The protein localises to the cytoplasm. The catalysed reaction is S-ubiquitinyl-[E2 ubiquitin-conjugating enzyme]-L-cysteine + [acceptor protein]-L-lysine = [E2 ubiquitin-conjugating enzyme]-L-cysteine + N(6)-ubiquitinyl-[acceptor protein]-L-lysine.. Its pathway is protein modification; protein ubiquitination. Its function is as follows. E3 ubiquitin-protein ligase that mediates the ubiquitination of ATP6V0C and targets it to degradation via the ubiquitin-proteasome pathway. Also plays a role in the inhibition of TLR-triggered innate immune response by mediating 'Lys'-48-linked ubiquitination and subsequent degradation of NF-kappa-B component RELA. This chain is E3 ubiquitin-protein ligase RNF182 (RNF182), found in Ailuropoda melanoleuca (Giant panda).